A 166-amino-acid polypeptide reads, in one-letter code: Phospholipase A2 inhibitor clone 10 (166 aa).

The first 19 residues, 1–19, serve as a signal peptide directing secretion; that stretch reads MRLILLSSLLLLGIFLANG. One can recognise a C-type lectin domain in the interval 46-161; the sequence is LKYSFLTVHR…CDDNLLVVCE (116 aa). Cystine bridges form between cysteine 83/cysteine 160 and cysteine 138/cysteine 152. Residue asparagine 122 is glycosylated (N-linked (GlcNAc...) asparagine).

It belongs to the alpha-type phospholipase A2 inhibitor family. As to quaternary structure, homotrimer; non-covalently linked. In terms of tissue distribution, expressed by the liver.

It is found in the secreted. Its function is as follows. This phospholipase A2 inhibitor binds directly phospholipase A2 in the presence or absence of calcium. The protein is Phospholipase A2 inhibitor clone 10 of Bothrops moojeni (Lance-headed viper).